Reading from the N-terminus, the 243-residue chain is Orotidine 5'-phosphate decarboxylase (243 aa).

Residues Asp-19, Lys-41, 69-78 (DLKFFDIPAT), Thr-124, Arg-185, Gln-194, Gly-214, and Arg-215 each bind substrate. Catalysis depends on Lys-71, which acts as the Proton donor.

Belongs to the OMP decarboxylase family. Type 1 subfamily. In terms of assembly, homodimer.

The catalysed reaction is orotidine 5'-phosphate + H(+) = UMP + CO2. It functions in the pathway pyrimidine metabolism; UMP biosynthesis via de novo pathway; UMP from orotate: step 2/2. In terms of biological role, catalyzes the decarboxylation of orotidine 5'-monophosphate (OMP) to uridine 5'-monophosphate (UMP). This is Orotidine 5'-phosphate decarboxylase from Xanthomonas oryzae pv. oryzae (strain MAFF 311018).